The chain runs to 382 residues: Alpha-methylacyl-CoA racemase (382 aa).

Residues Arg36 and 55-58 contribute to the substrate site; that span reads LDLK. Lys58 carries the post-translational modification N6-acetyllysine. At Lys87 the chain carries N6-acetyllysine; alternate. Lys87 is modified (N6-succinyllysine; alternate). 121–126 contributes to the substrate binding site; sequence GHDINY. His122 (proton acceptor) is an active-site residue. Asp152 serves as the catalytic Proton donor. Lys268 is subject to N6-succinyllysine. The short motif at 380–382 is the Microbody targeting signal element; the sequence is ASL.

This sequence belongs to the CoA-transferase III family. In terms of assembly, monomer.

The protein localises to the peroxisome. The protein resides in the mitochondrion. The catalysed reaction is a (2S)-2-methylacyl-CoA = a (2R)-2-methylacyl-CoA. It carries out the reaction (25R)-3alpha,7alpha,12alpha-trihydroxy-5beta-cholestan-26-oyl-CoA = (25S)-3alpha,7alpha,12alpha-trihydroxy-5beta-cholestan-26-oyl-CoA. It catalyses the reaction (2R,6)-dimethylheptanoyl-CoA = (2S,6)-dimethylheptanoyl-CoA. Its pathway is lipid metabolism; bile acid biosynthesis. It functions in the pathway lipid metabolism; fatty acid metabolism. In terms of biological role, catalyzes the interconversion of (R)- and (S)-stereoisomers of alpha-methyl-branched-chain fatty acyl-CoA esters. Acts only on coenzyme A thioesters, not on free fatty acids, and accepts as substrates a wide range of alpha-methylacyl-CoAs, including pristanoyl-CoA, trihydroxycoprostanoyl-CoA (an intermediate in bile acid synthesis), and arylpropionic acids like the anti-inflammatory drug ibuprofen (2-(4-isobutylphenyl)propionic acid) but neither 3-methyl-branched nor linear-chain acyl-CoAs. The sequence is that of Alpha-methylacyl-CoA racemase (AMACR) from Homo sapiens (Human).